A 2276-amino-acid chain; its full sequence is Non-reducing polyketide synthase VdtA (2276 aa).

Positions 8–243 are N-terminal acylcarrier protein transacylase (SAT) domain; sequence YLFGDQTYDY…KDIPIHAPYH (236 aa). Residues 372-804 enclose the Ketosynthase family 3 (KS3) domain; sequence RAKIAIVGMS…GGNSSVLVED (433 aa). Catalysis depends on for beta-ketoacyl synthase activity residues cysteine 544, histidine 679, and histidine 723. Positions 905-1206 are malonyl-CoA:ACP transacylase (MAT) domain; that stretch reads FTFTGQGAQY…KALPTLQRNR (302 aa). The For acyl/malonyl transferase activity role is filled by serine 996. The tract at residues 1300–1616 is product template (PT) domain; sequence TTTLHRIVDE…PRRVLRYILQ (317 aa). Residues 1304–1438 form an N-terminal hotdog fold region; the sequence is HRIVDEKSTE…CRIKFSDRST (135 aa). One can recognise a PKS/mFAS DH domain in the interval 1304–1612; the sequence is HRIVDEKSTE…IQGVPRRVLR (309 aa). The active-site Proton acceptor; for dehydratase activity is the histidine 1336. The interval 1465–1612 is C-terminal hotdog fold; that stretch reads TYRFNGPMAY…IQGVPRRVLR (148 aa). The active-site Proton donor; for dehydratase activity is aspartate 1525. Residues 1655 to 1729 enclose the Carrier 1 domain; it reads SGTLTEALRI…DLKRFFDKIN (75 aa). At serine 1689 the chain carries O-(pantetheine 4'-phosphoryl)serine. Positions 1735-1762 are disordered; sequence APAPVSDAPKQLQPSSSPVASATPSAPI. The segment covering 1748 to 1761 has biased composition (low complexity); it reads PSSSPVASATPSAP. Positions 1765 to 1839 constitute a Carrier 2 domain; it reads RSKFESVLNI…DLKAHFMSKN (75 aa). Serine 1799 is subject to O-(pantetheine 4'-phosphoryl)serine. Residues 1840-1854 are compositionally biased toward polar residues; it reads SDNGSSAVLTPQPSR. The segment at 1840–1882 is disordered; the sequence is SDNGSSAVLTPQPSRDSALPERTRPRVADTSDEEDAPVSANEF. Positions 1857 to 1868 are enriched in basic and acidic residues; the sequence is ALPERTRPRVAD. Positions 1886-1964 constitute a Carrier 3 domain; the sequence is ARSTSKYMAV…GLRSFFGFES (79 aa). Serine 1923 bears the O-(pantetheine 4'-phosphoryl)serine mark. The segment at 1967 to 1993 is disordered; it reads TATNPTASQSSSSISSGTSVFDTSPSP. The span at 1969–1990 shows a compositional bias: low complexity; the sequence is TNPTASQSSSSISSGTSVFDTS. A thioesterase (TE) domain region spans residues 2020–2271; that stretch reads PLPPATSVTL…GADHFSLLVS (252 aa).

The protein localises to the cytoplasmic vesicle. It catalyses the reaction 7 malonyl-CoA + acetyl-CoA + 7 H(+) = 7,9,10-trihydroxy-3-(2-oxopropyl)-1H-benzo[g]isochromen-1-one + 7 CO2 + 8 CoA + 2 H2O. The protein operates within secondary metabolite biosynthesis. Its function is as follows. Non-reducing polyketide synthase; part of the gene cluster that mediates the biosynthesis of viriditoxin, one of the 'classical' secondary metabolites produced by fungi and that has antibacterial activity. The first step is performed by the polyketide synthase VdtA which condenses one acetyl-CoA and 6 malonyl-CoA units to form the heptaketide monomer backbone of viriditoxin. The product of VdtA is then O-methylated on C7 by the O-methyltransferase VdtC. The O-methyl group is important for the stereoselective coupling of the monomers at the final step of viriditoxin biosynthesis. The short-chain dehydrogenase/reductase VdtF then acts as a stereospecific reductase converting the pyrone to dihydropyrone via the reduction of the C3-C4 double bond. The FAD-binding monooxygenase VdtE then converts the ketone group into a methyl-ester group to yield semi-viriditoxin. Finally, the laccase VdtB is involved in dimerization of 2 semi-viriditoxin molecules to yield the final viriditoxin. VdtB is responsible for the regioselective 6,6'-coupling of semi-viriditoxin, which yields (M)-viriditoxin and (P)-viriditoxin at a ratio of 1:2. The non-catalytic carboxylesterase-like protein VdtD affects the stereochemistical outcome of the coupling. The highly reducing polyketide synthase VdtX is not involved in viriditoxin synthesis, but might possibly play a role in the production of additional metabolites not identified yet. The protein is Non-reducing polyketide synthase VdtA of Byssochlamys spectabilis (Paecilomyces variotii).